The sequence spans 241 residues: FKBP-type peptidyl-prolyl cis-trans isomerase FkpA (241 aa).

The PPIase FKBP-type domain occupies 153–241 (ETKITVHYKG…IELLDVVNGV (89 aa)).

The protein belongs to the FKBP-type PPIase family.

The catalysed reaction is [protein]-peptidylproline (omega=180) = [protein]-peptidylproline (omega=0). PPIases accelerate the folding of proteins. It catalyzes the cis-trans isomerization of proline imidic peptide bonds in oligopeptides. The polypeptide is FKBP-type peptidyl-prolyl cis-trans isomerase FkpA (fkpA) (Buchnera aphidicola subsp. Acyrthosiphon pisum (strain APS) (Acyrthosiphon pisum symbiotic bacterium)).